Consider the following 195-residue polypeptide: Protein Fer3 (195 aa).

Disordered regions lie at residues 1 to 24 (MQHPHPIDQPTYMPDVPFQPLWGQ) and 56 to 82 (PLVPQRPSTNGRANGSSSSSKKTRRRV). Low complexity predominate over residues 63-75 (STNGRANGSSSSS). Positions 86 to 138 (AQRRAANIRERRRMFNLNEAFDKLRRKVPTFAYEKRLSRIETLRLAITYIGFM) constitute a bHLH domain. The segment at 145 to 175 (TPSNSHKSRSDVYGSMNGHHQAPPPAIHPHH) is disordered.

It localises to the nucleus. Transcription factor that binds to the E-box and functions as inhibitor of transcription. DNA binding requires dimerization with an E protein. Inhibits transcription activation by ASCL1/MASH1 by sequestering E proteins. The polypeptide is Protein Fer3 (fer3) (Drosophila melanogaster (Fruit fly)).